A 902-amino-acid chain; its full sequence is Leucine-rich repeat-containing G-protein coupled receptor 5 (902 aa).

A signal peptide spans 1–22; the sequence is MDTSKTSFFLFSVLCSLQLVGA. Over 23 to 558 the chain is Extracellular; that stretch reads ARPGKQQRSC…HLFGSWLTRT (536 aa). Disulfide bonds link Cys-32/Cys-38 and Cys-36/Cys-49. Residues 32–61 form the LRRNT domain; it reads CPTPCECEQEGMLVRVDCSDRALTSLPRNL. LRR repeat units lie at residues 41-61, 62-85, 86-109, 111-133, 134-157, 159-181, 182-205, 207-229, 230-253, 254-276, 278-300, 302-324, 325-347, 348-372, 374-393, 394-417, and 418-441; these read EGMLVRVDCSDRALTSLPRNL, SIFTSYLDLSMNNITNLPSNVMHN, LHFLEELRLAGNDLTYIPKGAFAG, GSLKVLMLQNNLLRQVPSEALHN, LRSLQSLRLDANHISYVPPSSFNG, FSLRHLWLDDNSLTEIPVRALES, LSALQAMTLALNKIHHIPDYAFRN, SSLVVLHLHNNRIYSLGKKCFDG, LHSLETLDLNYNNLDEFPAAIKTL, KNLKELGFHSNNIKSIPEQAFIG, PSLITIHFYDNPIQHVGRSAFQH, PELRTLILNGASQITEFPDLTGT, TSLESLTLTGAQLVYLPSAVCTQ, LPNLQVLDLSYNHIKDLPSFSGCQR, QKIDLRHNEVYEIRSTTFQQ, LVGLRSLDLAWNKIAVIHPNSFSS, and LPSLIKLDLSSNHLTSFPVTGLHG. N-linked (GlcNAc...) asparagine glycosylation is found at Asn-60 and Asn-74. Asn-205 carries an N-linked (GlcNAc...) asparagine glycan. Cys-345 and Cys-370 are disulfide-bonded. A disulfide bridge links Cys-476 with Cys-537. Asn-496 carries an N-linked (GlcNAc...) asparagine glycan. A helical membrane pass occupies residues 559-579; the sequence is GVWLIVLLSFVCNALVIATVF. The Cytoplasmic portion of the chain corresponds to 580 to 589; that stretch reads RPLSYVPSIK. A helical membrane pass occupies residues 590–610; sequence LLIGLIAIMNTLMGLSSGVLA. An LRR 18 repeat occupies 598-619; sequence MNTLMGLSSGVLATVDALTFGN. Residues 611 to 634 lie on the Extracellular side of the membrane; that stretch reads TVDALTFGNFAQYGAWWESGVGCQ. A disulfide bridge connects residues Cys-633 and Cys-708. The chain crosses the membrane as a helical span at residues 635-655; the sequence is ITGFLSVFAAETSIFLLTVAA. Residues 656–678 are Cytoplasmic-facing; that stretch reads LERGFSIKCTTKFETKSSFINVK. A helical membrane pass occupies residues 679-699; sequence LSIVFCFLLSIVIAVSPLLSG. At 700–718 the chain is on the extracellular side; the sequence is STYGTSPLCFPLLFGDPSS. Residues 719–739 form a helical membrane-spanning segment; sequence MGFMVALVLLNSLCFLVMTIA. Over 740-763 the chain is Cytoplasmic; that stretch reads YTKLYCSLEKGELENIWDCSMVKH. The chain crosses the membrane as a helical span at residues 764-784; the sequence is IALLLFTNCILYCPVAFLSFS. At 785–798 the chain is on the extracellular side; it reads SLLNLTFISPEVNK. N-linked (GlcNAc...) asparagine glycans are attached at residues Asn-788 and Asn-797. Residues 799-819 traverse the membrane as a helical segment; sequence SILLLIIPLPACLNPLLYILF. The Cytoplasmic segment spans residues 820 to 902; it reads NPHFKEDIGS…LSAVAFVPCH (83 aa).

The protein belongs to the G-protein coupled receptor 1 family.

The protein resides in the cell membrane. Its subcellular location is the golgi apparatus. It localises to the trans-Golgi network membrane. In terms of biological role, receptor for R-spondins that potentiates the canonical Wnt signaling pathway and acts as a stem cell marker of the intestinal epithelium and the hair follicle. Upon binding to R-spondins (RSPO1, RSPO2, RSPO3 or RSPO4), associates with phosphorylated LRP6 and frizzled receptors that are activated by extracellular Wnt receptors, triggering the canonical Wnt signaling pathway to increase expression of target genes. In contrast to classical G-protein coupled receptors, does not activate heterotrimeric G-proteins to transduce the signal. Involved in the development and/or maintenance of the adult intestinal stem cells during postembryonic development. The polypeptide is Leucine-rich repeat-containing G-protein coupled receptor 5 (lgr5) (Xenopus tropicalis (Western clawed frog)).